The primary structure comprises 209 residues: Large ribosomal subunit protein uL3 (209 aa).

Residues 133–152 (THGNSLSHRVPGSIGQNQTP) are disordered. Gln-150 carries the N5-methylglutamine modification.

It belongs to the universal ribosomal protein uL3 family. In terms of assembly, part of the 50S ribosomal subunit. Forms a cluster with proteins L14 and L19. In terms of processing, methylated by PrmB.

One of the primary rRNA binding proteins, it binds directly near the 3'-end of the 23S rRNA, where it nucleates assembly of the 50S subunit. The sequence is that of Large ribosomal subunit protein uL3 from Shigella sonnei (strain Ss046).